The following is a 421-amino-acid chain: 4-hydroxy-3-methylbut-2-en-1-yl diphosphate synthase (flavodoxin) (421 aa).

Residues Cys-311, Cys-314, Cys-357, and Glu-364 each contribute to the [4Fe-4S] cluster site.

Belongs to the IspG family. The cofactor is [4Fe-4S] cluster.

The catalysed reaction is (2E)-4-hydroxy-3-methylbut-2-enyl diphosphate + oxidized [flavodoxin] + H2O + 2 H(+) = 2-C-methyl-D-erythritol 2,4-cyclic diphosphate + reduced [flavodoxin]. It participates in isoprenoid biosynthesis; isopentenyl diphosphate biosynthesis via DXP pathway; isopentenyl diphosphate from 1-deoxy-D-xylulose 5-phosphate: step 5/6. Converts 2C-methyl-D-erythritol 2,4-cyclodiphosphate (ME-2,4cPP) into 1-hydroxy-2-methyl-2-(E)-butenyl 4-diphosphate. The chain is 4-hydroxy-3-methylbut-2-en-1-yl diphosphate synthase (flavodoxin) from Stenotrophomonas maltophilia (strain K279a).